A 1450-amino-acid polypeptide reads, in one-letter code: Inactive serine/threonine-protein kinase TEX14 (1450 aa).

ANK repeat units follow at residues 27–54, 55–84, and 88–117; these read LHEY…AVNT, QGQS…DPNH, and DGST…DLRL. 2 positions are modified to phosphoserine: serine 175 and serine 186. A Protein kinase domain is found at 199–512; that stretch reads IISAQNIYSF…ILKNDLKEFI (314 aa). ATP contacts are provided by residues 205 to 213 and lysine 267; that span reads IYSFGFGKF. Serine 431 is modified (phosphoserine; by PLK1). Phosphoserine is present on residues serine 561 and serine 662. The segment at 700–720 is disordered; it reads SDSLGSLNLPEPTREAKGKTS. The GPPX3Y signature appears at 791 to 797; the sequence is GPPSLAY. Disordered stretches follow at residues 852 to 906, 947 to 977, 992 to 1012, and 1035 to 1062; these read VSEE…MASV, PPWN…RGPE, DEPK…DKNK, and QPEQ…SSPI. 2 stretches are compositionally biased toward polar residues: residues 875 to 886 and 894 to 906; these read KQSTGEQLPSTQ and KNTN…MASV. The short motif at 889-897 is the D-box element; sequence RESLEKNTN. Residues 992 to 1011 are compositionally biased toward basic and acidic residues; the sequence is DEPKGNTKFGKMDNSDCDKN. A compositionally biased stretch (polar residues) spans 1038 to 1061; the sequence is QNEASQASCDTSVGTEKFYSTSSP. A phosphoserine mark is found at serine 1060 and serine 1221. 2 disordered regions span residues 1261 to 1282 and 1300 to 1418; these read THAT…QQHL and KQQQ…SLGT. Composition is skewed to polar residues over residues 1300-1311 and 1332-1344; these read KQQQVSSLASHE and TNSS…LSSR. Residues serine 1357 and serine 1358 each carry the phosphoserine modification. Basic and acidic residues-rich tracts occupy residues 1383 to 1397 and 1404 to 1413; these read STRE…VVEQ and SIKPERRESD. A phosphoserine mark is found at serine 1412 and serine 1449.

The protein belongs to the protein kinase superfamily. Interacts with KIF23 and RBM44. Interacts with CEP55; inhibiting interaction between CEP55 and PDCD6IP/ALIX and TSG101. Phosphorylated on Thr residues by CDK1 during early phases of mitosis, promoting the interaction with PLK1 and recruitment to kinetochores. Phosphorylated on Ser-431 by PLK1 during late prometaphase promotes the rapid depletion from kinetochores and its subsequent degradation by the APC/C complex. In terms of tissue distribution, detected in testis and spermatogonia. Not detectable in the other tissues tested.

It localises to the cytoplasm. Its subcellular location is the midbody. The protein localises to the chromosome. It is found in the centromere. The protein resides in the kinetochore. In terms of biological role, required both for the formation of intercellular bridges during meiosis and for kinetochore-microtubule attachment during mitosis. Intercellular bridges are evolutionarily conserved structures that connect differentiating germ cells and are required for spermatogenesis and male fertility. Acts by promoting the conversion of midbodies into intercellular bridges via its interaction with CEP55: interaction with CEP55 inhibits the interaction between CEP55 and PDCD6IP/ALIX and TSG101, blocking cell abscission and leading to transform midbodies into intercellular bridges. Also plays a role during mitosis: recruited to kinetochores by PLK1 during early mitosis and regulates the maturation of the outer kinetochores and microtubule attachment. Has no protein kinase activity in vitro. The protein is Inactive serine/threonine-protein kinase TEX14 (Tex14) of Mus musculus (Mouse).